Consider the following 558-residue polypeptide: 2-isopropylmalate synthase (558 aa).

The Pyruvate carboxyltransferase domain maps to 30–303 (PIWCSVDLRD…DPELDCRDIE (274 aa)). Aspartate 39, histidine 242, histidine 244, and asparagine 278 together coordinate Mg(2+). A regulatory domain region spans residues 437-558 (QPNARIKFVD…ANRVLEERAK (122 aa)).

This sequence belongs to the alpha-IPM synthase/homocitrate synthase family. LeuA type 2 subfamily. In terms of assembly, homodimer. Mg(2+) serves as cofactor.

It is found in the cytoplasm. It carries out the reaction 3-methyl-2-oxobutanoate + acetyl-CoA + H2O = (2S)-2-isopropylmalate + CoA + H(+). Its pathway is amino-acid biosynthesis; L-leucine biosynthesis; L-leucine from 3-methyl-2-oxobutanoate: step 1/4. In terms of biological role, catalyzes the condensation of the acetyl group of acetyl-CoA with 3-methyl-2-oxobutanoate (2-ketoisovalerate) to form 3-carboxy-3-hydroxy-4-methylpentanoate (2-isopropylmalate). The polypeptide is 2-isopropylmalate synthase (Agrobacterium fabrum (strain C58 / ATCC 33970) (Agrobacterium tumefaciens (strain C58))).